Here is a 148-residue protein sequence, read N- to C-terminus: Snaclec 6 (148 aa).

Residues 1-23 (MGRFIFVSFGLLVMFLSLSGTEA) form the signal peptide. Cystine bridges form between C27–C38, C55–C144, and C121–C136. The 112-residue stretch at 34–145 (YDQNCYKAFE…CSGTHNFVCK (112 aa)) folds into the C-type lectin domain. N130 is a glycosylation site (N-linked (GlcNAc...) asparagine).

Belongs to the snaclec family. Heterodimer; disulfide-linked. As to expression, expressed by the venom gland.

Its subcellular location is the secreted. Its function is as follows. Interferes with one step of hemostasis (modulation of platelet aggregation, or coagulation cascade, for example). The sequence is that of Snaclec 6 from Bitis arietans (African puff adder).